A 433-amino-acid polypeptide reads, in one-letter code: D-amino acid dehydrogenase (433 aa).

3–17 provides a ligand contact to FAD; that stretch reads IVVLGAGVLGVTSAW.

The protein belongs to the DadA oxidoreductase family. FAD serves as cofactor.

It carries out the reaction a D-alpha-amino acid + A + H2O = a 2-oxocarboxylate + AH2 + NH4(+). It functions in the pathway amino-acid degradation; D-alanine degradation; NH(3) and pyruvate from D-alanine: step 1/1. Its function is as follows. Oxidative deamination of D-amino acids. The sequence is that of D-amino acid dehydrogenase from Paracoccus denitrificans (strain Pd 1222).